Here is an 82-residue protein sequence, read N- to C-terminus: UPF0298 protein SPCG_0698 (82 aa).

The protein belongs to the UPF0298 family.

It localises to the cytoplasm. The chain is UPF0298 protein SPCG_0698 from Streptococcus pneumoniae (strain CGSP14).